A 247-amino-acid polypeptide reads, in one-letter code: MAEGGASKGEEPEKLPGLAEDEPQVLHGTGHCKWFNVRMGFGFISMISREGNPLDIPVDVFVHQSKLFMEGFRSLKEGEPVEFTFKKSPKGLESIRVTGPGGSPCLGSERRPKGKTLQKRKPKGDRCYNCGGLDHHAKECSLPPQPKKCHYCQSIMHMVANCPHKLAAQLPASSQGRQEAESQPCSSAAPREVGGGHGCTVLFPQEVKSEMAEHSDRSPQEVSSTKAFAAIGEQNKKGPLIQKRKKT.

The segment at 1–22 is disordered; that stretch reads MAEGGASKGEEPEKLPGLAEDE. Positions 27-100 constitute a CSD domain; the sequence is HGTGHCKWFN…GLESIRVTGP (74 aa). Residues Ser94, Ser103, and Ser108 each carry the phosphoserine modification. Residues 96-124 form a disordered region; sequence RVTGPGGSPCLGSERRPKGKTLQKRKPKG. Positions 112-123 are enriched in basic residues; sequence PKGKTLQKRKPK. 2 CCHC-type zinc fingers span residues 125–142 and 147–164; these read DRCYNCGGLDHHAKECSL and KKCHYCQSIMHMVANCPH. 8 residues coordinate Zn(2+): Cys127, Cys130, His135, Cys140, Cys149, Cys152, His157, and Cys162. Positions 173-186 are enriched in polar residues; that stretch reads SSQGRQEAESQPCS. A disordered region spans residues 173 to 247; the sequence is SSQGRQEAES…GPLIQKRKKT (75 aa). Residues 207-219 show a composition bias toward basic and acidic residues; sequence VKSEMAEHSDRSP.

This sequence belongs to the lin-28 family.

The protein resides in the nucleus. It localises to the nucleolus. Suppressor of microRNA (miRNA) biogenesis, including that of let-7 and possibly of miR107, miR-143 and miR-200c. Binds primary let-7 transcripts (pri-let-7), including pri-let-7g and pri-let-7a-1, and sequester them in the nucleolus, away from the microprocessor complex, hence preventing their processing into mature miRNA. Does not act on pri-miR21. The repression of let-7 expression is required for normal development and contributes to maintain the pluripotent state of embryonic stem cells by preventing let-7-mediated differentiation. When overexpressed, recruits ZCCHC11/TUT4 uridylyltransferase to pre-let-7 transcripts, leading to their terminal uridylation and degradation. This activity might not be relevant in vivo, as LIN28B-mediated inhibition of let-7 miRNA maturation appears to be ZCCHC11-independent. Interaction with target pre-miRNAs occurs via an 5'-GGAG-3' motif in the pre-miRNA terminal loop. Mediates MYC-induced let-7 repression. When overexpressed, may stimulate growth of carcinoma cell lines. The chain is Protein lin-28 homolog B (Lin28b) from Mus musculus (Mouse).